We begin with the raw amino-acid sequence, 208 residues long: FMN-dependent NADH:quinone oxidoreductase (208 aa).

FMN is bound by residues Ser-10, 16–18, and 96–99; these read SRS and MYNF.

This sequence belongs to the azoreductase type 1 family. As to quaternary structure, homodimer. Requires FMN as cofactor.

The enzyme catalyses 2 a quinone + NADH + H(+) = 2 a 1,4-benzosemiquinone + NAD(+). The catalysed reaction is N,N-dimethyl-1,4-phenylenediamine + anthranilate + 2 NAD(+) = 2-(4-dimethylaminophenyl)diazenylbenzoate + 2 NADH + 2 H(+). Functionally, quinone reductase that provides resistance to thiol-specific stress caused by electrophilic quinones. Its function is as follows. Also exhibits azoreductase activity. Catalyzes the reductive cleavage of the azo bond in aromatic azo compounds to the corresponding amines. The sequence is that of FMN-dependent NADH:quinone oxidoreductase from Xanthobacter autotrophicus (strain ATCC BAA-1158 / Py2).